The following is a 37-amino-acid chain: Kunitz-type proteinase inhibitor AEPI-IV (37 aa).

The 32-residue stretch at 6–37 folds into the BPTI/Kunitz inhibitor domain; the sequence is CQLPAVVGRCRGRFPRYYYNTEAGKCQRFIYG.

It belongs to the venom Kunitz-type family. Sea anemone type 2 potassium channel toxin subfamily.

Its subcellular location is the secreted. It localises to the nematocyst. Dual-function toxin that inhibits both the serine protease trypsin and voltage-gated potassium channels (Kv). This chain is Kunitz-type proteinase inhibitor AEPI-IV, found in Actinia equina (Beadlet anemone).